We begin with the raw amino-acid sequence, 126 residues long: uncharacterized protein (126 aa).

This is an uncharacterized protein from His1 virus (isolate Australia/Victoria) (His1V).